A 456-amino-acid chain; its full sequence is Glycine--tRNA ligase (456 aa).

Residues Arg-98 and Glu-168 each contribute to the substrate site. ATP-binding positions include 200 to 202, 210 to 215, 285 to 286, and 329 to 332; these read RNE, FRTREF, EL, and GVER. 215–219 serves as a coordination point for substrate; it reads FEQME. A substrate-binding site is contributed by 325 to 329; sequence EPSVG.

It belongs to the class-II aminoacyl-tRNA synthetase family. In terms of assembly, homodimer.

It localises to the cytoplasm. It catalyses the reaction tRNA(Gly) + glycine + ATP = glycyl-tRNA(Gly) + AMP + diphosphate. Its function is as follows. Catalyzes the attachment of glycine to tRNA(Gly). The protein is Glycine--tRNA ligase of Mycoplasma capricolum subsp. capricolum (strain California kid / ATCC 27343 / NCTC 10154).